Here is a 158-residue protein sequence, read N- to C-terminus: Succinate dehydrogenase assembly factor 2, mitochondrial (158 aa).

The N-terminal 17 residues, 1–17 (MFSANIARKVVCSVCRA), are a transit peptide targeting the mitochondrion.

It belongs to the SDHAF2 family. As to quaternary structure, interacts with sdha within the SDH catalytic dimer.

The protein localises to the mitochondrion matrix. Its function is as follows. Plays an essential role in the assembly of succinate dehydrogenase (SDH), an enzyme complex (also referred to as respiratory complex II) that is a component of both the tricarboxylic acid (TCA) cycle and the mitochondrial electron transport chain, and which couples the oxidation of succinate to fumarate with the reduction of ubiquinone (coenzyme Q) to ubiquinol. Required for flavinylation (covalent attachment of FAD) of the flavoprotein subunit sdha of the SDH catalytic dimer. This chain is Succinate dehydrogenase assembly factor 2, mitochondrial, found in Danio rerio (Zebrafish).